We begin with the raw amino-acid sequence, 152 residues long: Transcriptional regulator MraZ (152 aa).

SpoVT-AbrB domains are found at residues 5–52 (ASAI…PIHE) and 81–124 (AHEV…DEQA).

This sequence belongs to the MraZ family. As to quaternary structure, forms oligomers.

It localises to the cytoplasm. The protein localises to the nucleoid. The polypeptide is Transcriptional regulator MraZ (Shewanella oneidensis (strain ATCC 700550 / JCM 31522 / CIP 106686 / LMG 19005 / NCIMB 14063 / MR-1)).